The sequence spans 369 residues: UPF0283 membrane protein RPA1583 (369 aa).

Positions 1 to 61 are disordered; the sequence is MTERVPPRRP…APPPPPPRAR (61 aa). Low complexity predominate over residues 34-51; the sequence is AKPSAKADARPAASAAGA. 3 consecutive transmembrane segments (helical) span residues 90-110, 124-144, and 239-259; these read WGTV…WLWI, LGTI…IIIG, and VSLV…VAIA.

Belongs to the UPF0283 family.

The protein resides in the cell inner membrane. The protein is UPF0283 membrane protein RPA1583 of Rhodopseudomonas palustris (strain ATCC BAA-98 / CGA009).